The chain runs to 357 residues: Tribbles homolog 3 (357 aa).

A disordered region spans residues 1 to 63; sequence MRASPLAVPA…PAPVHAPDVT (63 aa). Residues 1-127 form an interaction with DDIT3/CHOP region; sequence MRASPLAVPA…GHVARPAEVL (127 aa). The Protein kinase domain maps to 68-316; that stretch reads LGPYVLLEPE…SGILLHPWLR (249 aa). The segment at 333-357 is disordered; the sequence is DQVVPEGPGLEEAEEEGERDMGLYG. Over residues 341-350 the composition is skewed to acidic residues; that stretch reads GLEEAEEEGE.

Belongs to the protein kinase superfamily. CAMK Ser/Thr protein kinase family. Tribbles subfamily. As to quaternary structure, interacts with AKT1, AKT2, MAP2K1 and MAP2K7. Interacts with ATF4. Interacts with DDIT3/CHOP and inhibits its interaction with EP300/P300. Interacts with APOBEC3C. Interacts (via N-terminus) with APOBEC3A. Interacts with RELA.

The protein localises to the nucleus. In terms of biological role, inactive protein kinase which acts as a regulator of the integrated stress response (ISR), a process for adaptation to various stress. Inhibits the transcriptional activity of DDIT3/CHOP and is involved in DDIT3/CHOP-dependent cell death during ER stress. May play a role in programmed neuronal cell death but does not appear to affect non-neuronal cells. Acts as a negative feedback regulator of the ATF4-dependent transcription during the ISR: while TRIB3 expression is promoted by ATF4, TRIB3 protein interacts with ATF4 and inhibits ATF4 transcription activity. Disrupts insulin signaling by binding directly to Akt kinases and blocking their activation. May bind directly to and mask the 'Thr-308' phosphorylation site in AKT1. Interacts with the NF-kappa-B transactivator p65 RELA and inhibits its phosphorylation and thus its transcriptional activation activity. Interacts with MAPK kinases and regulates activation of MAP kinases. Can inhibit APOBEC3A editing of nuclear DNA. The chain is Tribbles homolog 3 (TRIB3) from Bos taurus (Bovine).